An 87-amino-acid polypeptide reads, in one-letter code: Small ribosomal subunit protein uS17 (87 aa).

It belongs to the universal ribosomal protein uS17 family. Part of the 30S ribosomal subunit.

Its function is as follows. One of the primary rRNA binding proteins, it binds specifically to the 5'-end of 16S ribosomal RNA. This Alcanivorax borkumensis (strain ATCC 700651 / DSM 11573 / NCIMB 13689 / SK2) protein is Small ribosomal subunit protein uS17.